The primary structure comprises 150 residues: Large ribosomal subunit protein bL9 (150 aa).

The protein belongs to the bacterial ribosomal protein bL9 family.

In terms of biological role, binds to the 23S rRNA. This Pseudarthrobacter chlorophenolicus (strain ATCC 700700 / DSM 12829 / CIP 107037 / JCM 12360 / KCTC 9906 / NCIMB 13794 / A6) (Arthrobacter chlorophenolicus) protein is Large ribosomal subunit protein bL9.